A 253-amino-acid polypeptide reads, in one-letter code: Homeobox protein EMX2 (253 aa).

Residues 155–214 (PKRIRTAFSPSQLLRLEHAFEKNHYVVGAERKQLAHSLSLTETQVKVWFQNRRTKFKRQK) constitute a DNA-binding region (homeobox). Positions 213–253 (QKLEEEGSDSQQKKKGTHHINRWRIATKQASPEEIDVTSDD) are disordered. Positions 225 to 234 (KKKGTHHINR) are enriched in basic residues.

It belongs to the EMX homeobox family. In terms of assembly, interacts with translation initiation factor EIF4E.

It is found in the nucleus. Its subcellular location is the cell projection. It localises to the axon. In terms of biological role, transcription factor, which in cooperation with EMX1, acts to generate the boundary between the roof and archipallium in the developing brain. May function in combination with OTX1/2 to specify cell fates in the developing central nervous system. In the inner ear, it controls the distribution of GPR156 at hair cell boundaries, and regulates the organization of stereociliary bundles in opposite orientations across the line of polarity reversal (LPR). In Bos taurus (Bovine), this protein is Homeobox protein EMX2 (EMX2).